Consider the following 100-residue polypeptide: Aspartyl/glutamyl-tRNA(Asn/Gln) amidotransferase subunit C (100 aa).

Belongs to the GatC family. In terms of assembly, heterotrimer of A, B and C subunits.

The enzyme catalyses L-glutamyl-tRNA(Gln) + L-glutamine + ATP + H2O = L-glutaminyl-tRNA(Gln) + L-glutamate + ADP + phosphate + H(+). It carries out the reaction L-aspartyl-tRNA(Asn) + L-glutamine + ATP + H2O = L-asparaginyl-tRNA(Asn) + L-glutamate + ADP + phosphate + 2 H(+). Functionally, allows the formation of correctly charged Asn-tRNA(Asn) or Gln-tRNA(Gln) through the transamidation of misacylated Asp-tRNA(Asn) or Glu-tRNA(Gln) in organisms which lack either or both of asparaginyl-tRNA or glutaminyl-tRNA synthetases. The reaction takes place in the presence of glutamine and ATP through an activated phospho-Asp-tRNA(Asn) or phospho-Glu-tRNA(Gln). In Streptococcus sanguinis (strain SK36), this protein is Aspartyl/glutamyl-tRNA(Asn/Gln) amidotransferase subunit C.